The chain runs to 187 residues: Phospholipase A2-gamma (187 aa).

A signal peptide spans 1–25 (MITGLALSRVAFGLTAFLLLAVVSS). Cystine bridges form between Cys-29-Cys-56, Cys-33-Cys-62, Cys-38-Cys-115, Cys-49-Cys-69, Cys-68-Cys-93, and Cys-75-Cys-86. Ca(2+)-binding residues include Tyr-48, Gly-50, and Tyr-53. His-72 is an active-site residue. Asp-73 contacts Ca(2+).

It belongs to the phospholipase A2 family. The cofactor is Ca(2+). Strongly expressed in mature flowers but weakly expressed in other tissues. Detected in buds, open flowers and in pollen.

The protein resides in the secreted. Its subcellular location is the golgi apparatus. The protein localises to the trans-Golgi network. It is found in the endoplasmic reticulum. The catalysed reaction is a 1,2-diacyl-sn-glycero-3-phosphocholine + H2O = a 1-acyl-sn-glycero-3-phosphocholine + a fatty acid + H(+). PA2 catalyzes the calcium-dependent hydrolysis of the 2-acyl groups in 3-sn-phosphoglycerides. Releases lysophospholipids (LPLs) and free fatty acids (FFAs) from membrane phospholipids in response to hormones and other external stimuli. Plays a role in pollen development and germination and tube growth. In Arabidopsis thaliana (Mouse-ear cress), this protein is Phospholipase A2-gamma (PLA2-GAMMA).